A 934-amino-acid chain; its full sequence is Protocadherin gamma-C3 (934 aa).

Residues 1-31 (MVPEAWRSGLVSTGRVVGVLLLLGALNKAST) form the signal peptide. Cadherin domains lie at 32-135 (VIHY…NPAF), 136-244 (PTQE…APVF), 245-352 (NQSL…APEI), 353-457 (TVTS…PPQS), 458-567 (SQSS…APQV), and 572-685 (PGGS…APRE). The Extracellular portion of the chain corresponds to 32–693 (VIHYEIPEER…REQKKNLTFY (662 aa)). 6 N-linked (GlcNAc...) asparagine glycosylation sites follow: Asn245, Asn424, Asn478, Asn550, Asn615, and Asn689. A helical transmembrane segment spans residues 694–714 (LLLSLILVSVGFVVTVFGVII). Topologically, residues 715–934 (FKVYKWKQSR…KKKSGKKEKK (220 aa)) are cytoplasmic. 2 disordered regions span residues 804–843 (ESAP…WPNN) and 904–934 (ATLT…KEKK). Residues 812 to 843 (APPNTDWRFSQAQRPGTSGSQNGDDTGTWPNN) show a composition bias toward polar residues. A compositionally biased stretch (basic residues) spans 924–934 (NKKKSGKKEKK).

Its subcellular location is the cell membrane. Functionally, potential calcium-dependent cell-adhesion protein. May be involved in the establishment and maintenance of specific neuronal connections in the brain. The polypeptide is Protocadherin gamma-C3 (PCDHGC3) (Homo sapiens (Human)).